Here is a 149-residue protein sequence, read N- to C-terminus: Large ribosomal subunit protein uL15C (149 aa).

The segment at 21 to 40 (RIGKHRKQRGGRGNAGGQHH) is disordered.

This sequence belongs to the universal ribosomal protein uL15 family. Component of the large ribosomal subunit.

The protein resides in the cytoplasm. It is found in the cytosol. Its subcellular location is the endoplasmic reticulum. Functionally, component of the large ribosomal subunit. The ribosome is a large ribonucleoprotein complex responsible for the synthesis of proteins in the cell. The sequence is that of Large ribosomal subunit protein uL15C (rpl27a-3) from Entamoeba histolytica (strain ATCC 30459 / HM-1:IMSS / ABRM).